The sequence spans 118 residues: uncharacterized protein (118 aa).

The next 3 membrane-spanning stretches (helical) occupy residues 20 to 39 (VEGP…LLWI), 46 to 63 (LVVV…GEAV), and 67 to 85 (LSLV…AMSG). Positions 85 to 118 (GDKSKKKGKKQRSILKDADDWDDDSWDDEGDWDE) are disordered. Positions 88–97 (SKKKGKKQRS) are enriched in basic residues. Residues 103–118 (DDWDDDSWDDEGDWDE) show a composition bias toward acidic residues.

Its subcellular location is the cell membrane. This is an uncharacterized protein from Archaeoglobus fulgidus (strain ATCC 49558 / DSM 4304 / JCM 9628 / NBRC 100126 / VC-16).